The chain runs to 370 residues: uncharacterized protein (370 aa).

6 residues coordinate a divalent metal cation: aspartate 152, histidine 154, aspartate 184, asparagine 215, histidine 306, and histidine 308.

The protein belongs to the metallophosphoesterase superfamily. The cofactor is a divalent metal cation.

This is an uncharacterized protein from Helicobacter pylori (strain ATCC 700392 / 26695) (Campylobacter pylori).